We begin with the raw amino-acid sequence, 324 residues long: Beta-ketoacyl-[acyl-carrier-protein] synthase III (324 aa).

Residues Cys112 and His249 contribute to the active site. The ACP-binding stretch occupies residues 250–254 (QANDR). The active site involves Asn279.

It belongs to the thiolase-like superfamily. FabH family. Homodimer.

It is found in the cytoplasm. It carries out the reaction malonyl-[ACP] + acetyl-CoA + H(+) = 3-oxobutanoyl-[ACP] + CO2 + CoA. The protein operates within lipid metabolism; fatty acid biosynthesis. Its function is as follows. Catalyzes the condensation reaction of fatty acid synthesis by the addition to an acyl acceptor of two carbons from malonyl-ACP. Catalyzes the first condensation reaction which initiates fatty acid synthesis and may therefore play a role in governing the total rate of fatty acid production. Possesses both acetoacetyl-ACP synthase and acetyl transacylase activities. Its substrate specificity determines the biosynthesis of branched-chain and/or straight-chain of fatty acids. The sequence is that of Beta-ketoacyl-[acyl-carrier-protein] synthase III from Streptococcus pneumoniae serotype 2 (strain D39 / NCTC 7466).